Consider the following 29-residue polypeptide: Kalata-B11 (29 aa).

The cyclopeptide (Gly-Asp) cross-link spans 1–29; sequence GLPVCGETCFGGTCNTPGCSCTDPICTRD. 3 disulfide bridges follow: cysteine 5/cysteine 19, cysteine 9/cysteine 21, and cysteine 14/cysteine 26.

This is a cyclic peptide.

Functionally, probably participates in a plant defense mechanism. In Oldenlandia affinis, this protein is Kalata-B11.